A 365-amino-acid polypeptide reads, in one-letter code: Zinc finger MYND domain-containing protein 12 (365 aa).

Cys17, Cys20, Cys28, Cys31, Cys37, His41, His50, and Cys54 together coordinate Zn(2+). An MYND-type; atypical zinc finger spans residues 17-54 (CEVCEAPAERVCAACTVTYYCGVVHQKADWDSIHEKIC). TPR repeat units lie at residues 172-205 (SLLH…ASCA) and 214-247 (SGGY…WHAY).

As to expression, expressed predominantly in the testis.

The protein localises to the cell projection. It localises to the cilium. The protein resides in the flagellum. Functionally, required for sperm flagellum function and male fertility. This Homo sapiens (Human) protein is Zinc finger MYND domain-containing protein 12 (ZMYND12).